Reading from the N-terminus, the 154-residue chain is Putative pre-16S rRNA nuclease (154 aa).

It belongs to the YqgF nuclease family.

The protein resides in the cytoplasm. Could be a nuclease involved in processing of the 5'-end of pre-16S rRNA. This is Putative pre-16S rRNA nuclease from Rickettsia felis (strain ATCC VR-1525 / URRWXCal2) (Rickettsia azadi).